The chain runs to 196 residues: Rac-like GTP-binding protein RAC9 (196 aa).

13 to 20 (GDGAVGKT) is a binding site for GTP. An Effector region motif is present at residues 35 to 43 (YVPTVFDNF). GTP is bound by residues 60–64 (DTAGQ) and 118–121 (TKLD). At C193 the chain carries Cysteine methyl ester. C193 carries the S-geranylgeranyl cysteine lipid modification. Positions 194–196 (AFL) are cleaved as a propeptide — removed in mature form.

The protein belongs to the small GTPase superfamily. Rho family.

It localises to the cytoplasm. Its subcellular location is the membrane. In terms of biological role, inactive GDP-bound Rho GTPases reside in the cytosol, are found in a complex with Rho GDP-dissociation inhibitors (Rho GDIs), and are released from the GDI protein in order to translocate to membranes upon activation. This is Rac-like GTP-binding protein RAC9 (RAC9) from Gossypium hirsutum (Upland cotton).